Here is a 432-residue protein sequence, read N- to C-terminus: Hexuronate transporter (432 aa).

The signal sequence occupies residues 1 to 31 (MRKIKGLRWYMIALVTLGTVLGYLTRNTVAA). The Periplasmic portion of the chain corresponds to 33-48 (APTLMEELNISTQQYS). A helical membrane pass occupies residues 49 to 69 (YIIAAYSAAYTVMQPVAGYVL). The Cytoplasmic portion of the chain corresponds to 70 to 75 (DVLGTK). A helical transmembrane segment spans residues 76 to 96 (IGYAMFAVLWAVFCGATALAG). Over 97 to 99 (SWG) the chain is Periplasmic. Residues 100 to 120 (GLAVARGAVGAAEAAMIPAGL) form a helical membrane-spanning segment. At 121–138 (KASSEWFPAKERSIAVGY) the chain is on the cytoplasmic side. The helical transmembrane segment at 139–159 (FNVGSSIGAMIAPPLVVWAIV) threads the bilayer. The Periplasmic segment spans residues 160 to 164 (MHSWQ). The chain crosses the membrane as a helical span at residues 165–185 (MAFIISGALSFIWAMAWLIFY). The Cytoplasmic segment spans residues 186–236 (KHPRDQKHLTDEERDYIINGQEAQHQVSTAKKMSVGQILRNRQFWGIALPR). Residues 237-257 (FLAEPAWGTFNAWIPLFMFKV) form a helical membrane-spanning segment. Topologically, residues 258-264 (YGFNLKE) are periplasmic. The chain crosses the membrane as a helical span at residues 265–285 (IAMFAWMPMLFADLGCILGGY). The Cytoplasmic portion of the chain corresponds to 286-293 (LPPLFQRW). Residues 294-314 (FGVNLIVSRKMVVTLGAVLMI) form a helical membrane-spanning segment. At 315–317 (GPG) the chain is on the periplasmic side. Residues 318-338 (MIGLFTNPYVAIMLLCIGGFA) form a helical membrane-spanning segment. Topologically, residues 339-369 (HQALSGALITLSSDVFGRNEVATANGLTGMS) are cytoplasmic. A helical transmembrane segment spans residues 370-390 (AWLASTLFALVVGALADTIGF). S391 is a topological domain (periplasmic). Residues 392 to 412 (PLFAVLAVFDLLGALVIWTVL) form a helical membrane-spanning segment. Residues 413 to 432 (QNKPAIEVAQETHNDPAPQH) lie on the Cytoplasmic side of the membrane.

The protein belongs to the major facilitator superfamily. Phthalate permease family.

Its subcellular location is the cell inner membrane. The enzyme catalyses aldehydo-D-glucuronate(in) + H(+)(in) = aldehydo-D-glucuronate(out) + H(+)(out). It catalyses the reaction aldehydo-D-galacturonate(out) + H(+)(out) = aldehydo-D-galacturonate(in) + H(+)(in). Transport of aldohexuronates such as D-glucuronate and D-galacturonate. The chain is Hexuronate transporter (exuT) from Escherichia coli O157:H7.